The chain runs to 303 residues: Ribosomal protein L11 methyltransferase (303 aa).

S-adenosyl-L-methionine is bound by residues T146, G167, D189, and N236.

The protein belongs to the methyltransferase superfamily. PrmA family.

It is found in the cytoplasm. It carries out the reaction L-lysyl-[protein] + 3 S-adenosyl-L-methionine = N(6),N(6),N(6)-trimethyl-L-lysyl-[protein] + 3 S-adenosyl-L-homocysteine + 3 H(+). In terms of biological role, methylates ribosomal protein L11. This is Ribosomal protein L11 methyltransferase from Acinetobacter baylyi (strain ATCC 33305 / BD413 / ADP1).